The sequence spans 121 residues: Basic phospholipase A2 VRV-PL-V (121 aa).

Intrachain disulfides connect Cys26–Cys115, Cys28–Cys44, Cys43–Cys95, Cys49–Cys121, Cys50–Cys88, Cys57–Cys81, and Cys75–Cys86. The Ca(2+) site is built by Tyr27, Gly29, and Gly31. Residue His47 is part of the active site. Asp48 is a Ca(2+) binding site. Residue Asp89 is part of the active site.

Belongs to the phospholipase A2 family. Group II subfamily. D49 sub-subfamily. Monomer. Requires Ca(2+) as cofactor. In terms of tissue distribution, expressed by the venom gland.

It is found in the secreted. The catalysed reaction is a 1,2-diacyl-sn-glycero-3-phosphocholine + H2O = a 1-acyl-sn-glycero-3-phosphocholine + a fatty acid + H(+). Snake venom phospholipase A2 (PLA2) that has a low enzymatic activity. PLA2 catalyzes the calcium-dependent hydrolysis of the 2-acyl groups in 3-sn-phosphoglycerides. This is Basic phospholipase A2 VRV-PL-V from Daboia russelii (Russel's viper).